We begin with the raw amino-acid sequence, 296 residues long: Probable endonuclease 4 (296 aa).

His-68, His-109, Glu-144, Asp-178, His-181, His-213, Asp-226, His-228, and Glu-258 together coordinate Zn(2+).

The protein belongs to the AP endonuclease 2 family. Zn(2+) serves as cofactor.

It carries out the reaction Endonucleolytic cleavage to 5'-phosphooligonucleotide end-products.. Functionally, endonuclease IV plays a role in DNA repair. It cleaves phosphodiester bonds at apurinic or apyrimidinic (AP) sites, generating a 3'-hydroxyl group and a 5'-terminal sugar phosphate. The sequence is that of Probable endonuclease 4 from Pediococcus pentosaceus (strain ATCC 25745 / CCUG 21536 / LMG 10740 / 183-1w).